Reading from the N-terminus, the 210-residue chain is Protein DrgA (210 aa).

The protein belongs to the nitroreductase family. FMN is required as a cofactor.

Controls resistance to the herbicide Dinoseb and metronidazole. Involved in detoxification of Dinoseb via the reduction of the nitro group(s) and this process is accompanied by the formation of toxic superoxide anions. This Synechocystis sp. (strain ATCC 27184 / PCC 6803 / Kazusa) protein is Protein DrgA (drgA).